Reading from the N-terminus, the 199-residue chain is Insertion sequence IS21-like putative ATP-binding protein (199 aa).

An ATP-binding site is contributed by 114–121; that stretch reads GDSGTGKT.

This sequence belongs to the IS21/IS1162 putative ATP-binding protein family.

This chain is Insertion sequence IS21-like putative ATP-binding protein (tnpB), found in Bacteroides fragilis (strain YCH46).